The sequence spans 94 residues: UPF0235 protein TK0768 (94 aa).

This sequence belongs to the UPF0235 family.

This chain is UPF0235 protein TK0768, found in Thermococcus kodakarensis (strain ATCC BAA-918 / JCM 12380 / KOD1) (Pyrococcus kodakaraensis (strain KOD1)).